A 498-amino-acid polypeptide reads, in one-letter code: MEDKAQYVFALLGILATLYFVRWSTDPLRHIPAIGPSAPIVSYLSAYRYCRNAQSILQEGYHKYKVFRVSLVDRWVVVVSGADMNEELRKVPDTHVSFQEAADDLIQLKYTIAPDVNEHPIHTPVIRGPLTRNLGALFPDVVDEINVAFPELMPPAAKRGDWVAVSVRDTMGRIVSRASNRIFVGLPLCRNPDYLKTVVEFAFSVAKSRTIINAAPAVFRPIVGHFLPWAKRAVRNAGVHVKPLIRLRVSKMQDAGDDQTDKSCDYLMWLIEEAQKTKQNLDIVVQGILVSNFAAIHTSSNSITHSLLNLAAYPQHVQPLREEIEGIIKEYGWTKEAIGKMWKLDSFMRESQRLSGISGISVMRKVLQDITLSDGTYLPKGTLVVAAAFATHTDERYYENPEVFEPFRFYDMRTENDALRKQYVNTSREFITFGHGKHACPGRFFAVNELKAMMAYIILHYDVKLEEGVSRPENVWIWHNISPASTKVLFRERQSKVQ.

A helical transmembrane segment spans residues 7 to 24 (YVFALLGILATLYFVRWS). Asn425 carries an N-linked (GlcNAc...) asparagine glycan. A heme-binding site is contributed by Cys440.

Belongs to the cytochrome P450 family. The cofactor is heme.

The protein localises to the membrane. Its pathway is secondary metabolite biosynthesis. Its function is as follows. Cytochrome P450 monooxygenase that is able to use dehydroabietic acid and testosterone as substrates for oxidation, suggesting that the natural substrate(s) may be structurally related to steroid compounds. This chain is Cytochrome P450 monooxygenase 110, found in Postia placenta (strain ATCC 44394 / Madison 698-R) (Brown rot fungus).